We begin with the raw amino-acid sequence, 367 residues long: 3-dehydroquinate synthase (367 aa).

Residues 69–74 (DGEAFK), 103–107 (GVIGD), 127–128 (TT), Lys-140, and Lys-149 each bind NAD(+). 3 residues coordinate Zn(2+): Glu-182, His-245, and His-262.

This sequence belongs to the sugar phosphate cyclases superfamily. Dehydroquinate synthase family. It depends on Co(2+) as a cofactor. Zn(2+) serves as cofactor. Requires NAD(+) as cofactor.

The protein localises to the cytoplasm. The enzyme catalyses 7-phospho-2-dehydro-3-deoxy-D-arabino-heptonate = 3-dehydroquinate + phosphate. It participates in metabolic intermediate biosynthesis; chorismate biosynthesis; chorismate from D-erythrose 4-phosphate and phosphoenolpyruvate: step 2/7. Functionally, catalyzes the conversion of 3-deoxy-D-arabino-heptulosonate 7-phosphate (DAHP) to dehydroquinate (DHQ). This is 3-dehydroquinate synthase from Ectopseudomonas mendocina (strain ymp) (Pseudomonas mendocina).